The primary structure comprises 61 residues: Prophage outer membrane lipoprotein RzoR (61 aa).

The N-terminal stretch at 1–19 is a signal peptide; the sequence is MRKLKMMLCVMMLPLVVVG. C20 carries N-palmitoyl cysteine lipidation. Residue C20 is the site of S-diacylglycerol cysteine attachment.

Belongs to the lambdalikevirus o-spanin family. As to quaternary structure, homodimer; disulfide-linked. Interacts (via C-terminus) with RZ (via C-terminus). Part of the spanin complex which spans the entire periplasmic space. The spanin complex is composed of spanin, inner membrane subunit and spanin, outer membrane subunit.

It is found in the cell outer membrane. Component of the spanin complex that disrupts the outer membrane and causes cell lysis during virus exit. The spanin complex conducts the final step in cell lysis by disrupting the outer membrane after holin and endolysin action have permeabilized the inner membrane and degraded the host peptidoglycans. The protein is Prophage outer membrane lipoprotein RzoR (rzoR) of Escherichia coli (strain K12).